A 451-amino-acid polypeptide reads, in one-letter code: MKQNKRKHLQTLFETLGEKHQFNGTVLAAEGGDILYHHSFGYAEMTEKRPLKTNSLFELASLSKPFTALGIILLEEKGILGYEDKVDRWLPGFPYQGVTIRHLLNHTSGLPDYMGWFFANWDSHKIAVNQDIVDMLMNEGLSGYFEPNEGWMYSNTGYVLLAVIIEKASGMSYADFIKTSIFLPAGMNETRVYNRRLSPERIDHYAYGYVYDVHSETYVLPDELEETNYVVYLDGIQGDGTVNSVTSDLFRFDQALYQDDFISKASKESAFSPVRLNNGETIDYGFGWVLQNSPEKGRIVSHSGGWPGYSTMMIRYIDHRKTLIYLSNKEEDTEYEQAILKAAEHILFGQPYDVPERPADKKKKAIDTAIYSRYVGSYLLQDGTAAQVTTENERLYLEIAGQLRLELFPSSETRFFLRALSVEVEFTLGEDAAKSFILYEDGSEEEAVRTK.

Serine 61 acts as the Acyl-ester intermediate in catalysis.

This sequence belongs to the beta-lactamase family.

It is found in the forespore outer membrane. It functions in the pathway cell wall biogenesis; peptidoglycan biosynthesis. Its function is as follows. Probably involved in peptidoglycan modification during cortex synthesis. The polypeptide is Penicillin-binding protein 4* (pbpE) (Bacillus subtilis (strain 168)).